Here is a 206-residue protein sequence, read N- to C-terminus: Superoxide dismutase [Mn] (206 aa).

Positions 27, 82, 168, and 172 each coordinate Mn(2+).

It belongs to the iron/manganese superoxide dismutase family. Homodimer. The cofactor is Mn(2+).

The enzyme catalyses 2 superoxide + 2 H(+) = H2O2 + O2. Its function is as follows. Destroys superoxide anion radicals which are normally produced within the cells and which are toxic to biological systems. In Escherichia coli (strain K12), this protein is Superoxide dismutase [Mn] (sodA).